The sequence spans 395 residues: S-adenosylmethionine synthase (395 aa).

H16 serves as a coordination point for ATP. Mg(2+) is bound at residue D18. E44 contributes to the K(+) binding site. Residues E57 and Q100 each contribute to the L-methionine site. The flexible loop stretch occupies residues 100 to 110 (QSPDIAQGVDR). ATP is bound by residues 167–169 (DAK), 233–234 (RF), D242, 248–249 (RK), A265, and K269. D242 contacts L-methionine. Residue K273 participates in L-methionine binding.

Belongs to the AdoMet synthase family. Homotetramer; dimer of dimers. It depends on Mg(2+) as a cofactor. Requires K(+) as cofactor.

The protein resides in the cytoplasm. The enzyme catalyses L-methionine + ATP + H2O = S-adenosyl-L-methionine + phosphate + diphosphate. Its pathway is amino-acid biosynthesis; S-adenosyl-L-methionine biosynthesis; S-adenosyl-L-methionine from L-methionine: step 1/1. Functionally, catalyzes the formation of S-adenosylmethionine (AdoMet) from methionine and ATP. The overall synthetic reaction is composed of two sequential steps, AdoMet formation and the subsequent tripolyphosphate hydrolysis which occurs prior to release of AdoMet from the enzyme. This chain is S-adenosylmethionine synthase, found in Paraburkholderia phymatum (strain DSM 17167 / CIP 108236 / LMG 21445 / STM815) (Burkholderia phymatum).